The chain runs to 652 residues: Protein high chlorophyll fluorescent 107 (652 aa).

Disordered regions lie at residues 1 to 21 (MHFF…NTSS) and 78 to 121 (VFSP…EGKK). The N-terminal 68 residues, 1–68 (MHFFFVPNSS…TFSSKNTYLY (68 aa)), are a transit peptide targeting the chloroplast. The segment covering 105–121 (PLLENSDKESSEEEGKK) has biased composition (basic and acidic residues). TPR repeat units lie at residues 168 to 201 (LDLS…WPED), 202 to 235 (GRPY…TQGE), 237 to 270 (SYIW…DKKH), 271 to 304 (VAAW…CGRN), 305 to 338 (EYIY…NSRS), 339 to 372 (CASW…SPKN), 374 to 406 (FAWH…NPRD), 407 to 440 (PVLL…DPRH), 441 to 474 (QPVW…DANT), 478 to 511 (SRCL…NSQS), 543 to 576 (TEVV…GQNN), and 598 to 631 (QQPE…DPLK). Positions 585 to 610 (LRNMNRTKDSQSNQQPESSAGREDIE) are disordered.

As to quaternary structure, may form homomultimers. Part of a multi-subunit complex in the range of 60-190 and 600-800 kDa in chloroplast membranes.

Its subcellular location is the plastid. The protein localises to the chloroplast. It localises to the chloroplast membrane. The protein resides in the chloroplast stroma. Functionally, involved, directly or indirectly, in the processing of chloroplast encoded mRNAs. Exhibits sequence-specific RNA binding and RNA remodeling activities, probably leading to the activation of translation of the target gene cluster psbB-psbT-psbH-petB-petD. Blocks 5'-3' and 3'-5' exoribonucleases (e.g. polynucleotide phosphorylase (PNPase), RNase R) in vitro. Necessary for intercistronic RNA processing of the psbH 5' untranslated region or the stabilization of 5' processed psbH RNAs. Also required for the synthesis of psbB. This Arabidopsis thaliana (Mouse-ear cress) protein is Protein high chlorophyll fluorescent 107.